Here is a 396-residue protein sequence, read N- to C-terminus: Unsaturated chondroitin disaccharide hydrolase (396 aa).

The active-site Nucleophile is the Asp-113. Substrate is bound by residues Asp-113, Asp-173, Gly-231, Thr-233, Arg-245, Trp-249, Ser-363, and Ser-366. Asp-173 (proton donor) is an active-site residue.

It belongs to the glycosyl hydrolase 88 family. Monomer.

It catalyses the reaction beta-D-4-deoxy-Delta(4)-GlcpA-(1-&gt;3)-beta-D-GalpNAc6S + H2O = N-acetyl-beta-D-galactosamine 6-sulfate + 5-dehydro-4-deoxy-D-glucuronate. Functionally, catalyzes the hydrolysis of unsaturated hyaluronate and chondroitin disaccharides. Also degrades unsaturated heparin disaccharides. Releases 4-deoxy-4,5-didehydro D-glucuronic acid or 4-deoxy-4,5-didehydro L-iduronic acid from chondroitin disaccharides, hyaluronan disaccharides and heparin disaccharides and cleaves both glycosidic (1-&gt;3) and (1-&gt;4) bonds. Prefers sulfated glycosaminoglycans compared to unsulfated glycosaminoglycans. Probably required for mammalian cells invasion through the degradation of extracellular sulfated glycosaminoglycans such as chondroitin and hyaluronan. The chain is Unsaturated chondroitin disaccharide hydrolase (ugl) from Streptococcus pneumoniae (strain ATCC BAA-255 / R6).